Here is a 371-residue protein sequence, read N- to C-terminus: 4-hydroxy-3-methylbut-2-en-1-yl diphosphate synthase (flavodoxin) (371 aa).

Cys270, Cys273, Cys305, and Glu312 together coordinate [4Fe-4S] cluster.

Belongs to the IspG family. [4Fe-4S] cluster serves as cofactor.

The catalysed reaction is (2E)-4-hydroxy-3-methylbut-2-enyl diphosphate + oxidized [flavodoxin] + H2O + 2 H(+) = 2-C-methyl-D-erythritol 2,4-cyclic diphosphate + reduced [flavodoxin]. Its pathway is isoprenoid biosynthesis; isopentenyl diphosphate biosynthesis via DXP pathway; isopentenyl diphosphate from 1-deoxy-D-xylulose 5-phosphate: step 5/6. Converts 2C-methyl-D-erythritol 2,4-cyclodiphosphate (ME-2,4cPP) into 1-hydroxy-2-methyl-2-(E)-butenyl 4-diphosphate. This chain is 4-hydroxy-3-methylbut-2-en-1-yl diphosphate synthase (flavodoxin), found in Shewanella loihica (strain ATCC BAA-1088 / PV-4).